The chain runs to 351 residues: DNA polymerase IV (351 aa).

The region spanning 3–187 (ILFVDFDYFF…IDIDEVPGVG (185 aa)) is the UmuC domain. Mg(2+)-binding residues include D7 and D105. Residue E106 is part of the active site.

Belongs to the DNA polymerase type-Y family. It depends on Mg(2+) as a cofactor.

The catalysed reaction is DNA(n) + a 2'-deoxyribonucleoside 5'-triphosphate = DNA(n+1) + diphosphate. Functionally, poorly processive, error-prone DNA polymerase involved in untargeted mutagenesis. Copies undamaged DNA at stalled replication forks, which arise in vivo from mismatched or misaligned primer ends. These misaligned primers can be extended by PolIV. Exhibits no 3'-5' exonuclease (proofreading) activity. May be involved in translesional synthesis. In Sulfurisphaera tokodaii (strain DSM 16993 / JCM 10545 / NBRC 100140 / 7) (Sulfolobus tokodaii), this protein is DNA polymerase IV.